The following is a 156-amino-acid chain: MPNIHDVEVRDLQVNADQRGHLVEVFRSDWDEYEIDPEMSYYSMTYPGVVRAWHRHLEGQIDHFVCPKGRITVGIYDDREDSPTQGELDTFVIGEHNQQVIRIPGDCWHGFKAIGDEPSLLINYPTNLYDYEDPDEERIPYDDDRIPYDWNAEIHG.

Residues Arg19, Glu24, Met39–Tyr41, Arg51, His54, and His109 contribute to the substrate site.

It belongs to the dTDP-4-dehydrorhamnose 3,5-epimerase family.

It functions in the pathway protein modification; protein glycosylation. It participates in cell surface structure biogenesis; S-layer biogenesis. In terms of biological role, epimerase involved in N-glycan biosynthetic pathway that takes place under low-salt conditions (1.75 M instead of 3.4 M). Participates in the formation of the tetrasaccharide present at 'Asn-532' of S-layer glycoprotein Csg, consisting of a sulfated hexose, 2 hexoses and rhamnose. Involved in the addition of final rhamnose (sugar 4) of the tetrasaccharide on the dolichol phosphate carrier. The chain is Probable low-salt glycan biosynthesis epimerase Agl13 (agl13) from Haloferax volcanii (strain ATCC 29605 / DSM 3757 / JCM 8879 / NBRC 14742 / NCIMB 2012 / VKM B-1768 / DS2) (Halobacterium volcanii).